The following is a 282-amino-acid chain: 4-diphosphocytidyl-2-C-methyl-D-erythritol kinase (282 aa).

K9 is a catalytic residue. 98–108 serves as a coordination point for ATP; it reads PMGGGLGGGSS. The active site involves D140.

The protein belongs to the GHMP kinase family. IspE subfamily. As to quaternary structure, homodimer.

The enzyme catalyses 4-CDP-2-C-methyl-D-erythritol + ATP = 4-CDP-2-C-methyl-D-erythritol 2-phosphate + ADP + H(+). It participates in isoprenoid biosynthesis; isopentenyl diphosphate biosynthesis via DXP pathway; isopentenyl diphosphate from 1-deoxy-D-xylulose 5-phosphate: step 3/6. Functionally, catalyzes the phosphorylation of the position 2 hydroxy group of 4-diphosphocytidyl-2C-methyl-D-erythritol. The chain is 4-diphosphocytidyl-2-C-methyl-D-erythritol kinase from Salmonella agona (strain SL483).